Here is a 185-residue protein sequence, read N- to C-terminus: Segregation and condensation protein B (185 aa).

The protein belongs to the ScpB family. Homodimer. Homodimerization may be required to stabilize the binding of ScpA to the Smc head domains. Component of a cohesin-like complex composed of ScpA, ScpB and the Smc homodimer, in which ScpA and ScpB bind to the head domain of Smc. The presence of the three proteins is required for the association of the complex with DNA.

The protein localises to the cytoplasm. Its function is as follows. Participates in chromosomal partition during cell division. May act via the formation of a condensin-like complex containing Smc and ScpA that pull DNA away from mid-cell into both cell halves. The polypeptide is Segregation and condensation protein B (Alkaliphilus oremlandii (strain OhILAs) (Clostridium oremlandii (strain OhILAs))).